A 210-amino-acid chain; its full sequence is 3-hexulose-6-phosphate synthase (210 aa).

Belongs to the HPS/KGPDC family. HPS subfamily.

It carries out the reaction D-ribulose 5-phosphate + formaldehyde = D-arabino-hex-3-ulose 6-phosphate. It functions in the pathway one-carbon metabolism; formaldehyde assimilation via RuMP pathway; D-fructose 6-phosphate from D-ribulose 5-phosphate and formaldehyde: step 1/2. Its function is as follows. Catalyzes the condensation of ribulose 5-phosphate with formaldehyde to form 3-hexulose 6-phosphate. The polypeptide is 3-hexulose-6-phosphate synthase (Staphylococcus epidermidis (strain ATCC 12228 / FDA PCI 1200)).